Consider the following 457-residue polypeptide: Vasoactive intestinal polypeptide receptor (457 aa).

Positions 1 to 19 (MGLVEVVWWWRWRFGGGGG) are cleaved as a signal peptide. Topologically, residues 20 to 141 (GLVVEVEVWW…KEQTAFYGTV (122 aa)) are extracellular. 3 cysteine pairs are disulfide-bonded: Cys51/Cys73, Cys64/Cys105, and Cys87/Cys122. Residues Asn59, Asn70, Asn100, and Asn104 are each glycosylated (N-linked (GlcNAc...) asparagine). Residues 142-166 (KTGYTIGHTLSLIALTAAMIILCLF) traverse the membrane as a helical segment. The Cytoplasmic portion of the chain corresponds to 167-173 (RKLHCTR). A helical membrane pass occupies residues 174 to 193 (NYIHMHLFMSFIMRAIAVFI). Topologically, residues 194 to 215 (KDVTLFESGEPEHCFVSSVGCK) are extracellular. Residues Cys214 and Cys284 are joined by a disulfide bond. The helical transmembrane segment at 216-239 (AMMVFFQYCVMANFFWLLVEGLYL) threads the bilayer. The Cytoplasmic segment spans residues 240-253 (HTLLVISFFSERKY). Residues 254–275 (FWWYILIGWGAPSVFITAWTVV) form a helical membrane-spanning segment. Residues 276–292 (RIYFFNVGCWEEIIESP) lie on the Extracellular side of the membrane. Residues 293–316 (IWWIIKTPILVSILVNFILFICII) form a helical membrane-spanning segment. Topologically, residues 317 to 341 (RILVQKLHSPDVGHNETSQYSRLAK) are cytoplasmic. The helical transmembrane segment at 342–361 (STLLLIPLFGIHYIMFAFFP) threads the bilayer. Residues 362–373 (DNFKAQVKLVFE) are Extracellular-facing. A helical membrane pass occupies residues 374–393 (LVVGSFQGFVVAVLYCFLNG). The Cytoplasmic segment spans residues 394–457 (EVQAELKRKW…SSFQAEFSLV (64 aa)).

It belongs to the G-protein coupled receptor 2 family. Expressed in pituitary, hypothalamus, small intestine and ovarian follicles.

The protein resides in the cell membrane. In terms of biological role, this is a receptor for VIP. The activity of this receptor is mediated by G proteins which activate adenylyl cyclase. This Meleagris gallopavo (Wild turkey) protein is Vasoactive intestinal polypeptide receptor (VIPR1).